Here is a 144-residue protein sequence, read N- to C-terminus: Gas vesicle protein A1 (144 aa).

Residues 72-144 (EAGPRKDPGL…APSRRKEEQE (73 aa)) are disordered. Basic and acidic residues predominate over residues 113–127 (KQARDDGGSERETSS).

This sequence belongs to the gas vesicle GvpA family. The gas vesicle shell is 2 nm thick and consists of a single layer of this protein. It forms helical ribs nearly perpendicular to the long axis of the vesicle.

The protein localises to the gas vesicle shell. In terms of biological role, gas vesicles are hollow, gas filled proteinaceous nanostructures found in some microorganisms. During planktonic growth they allow positioning of the organism at a favorable depth for light or nutrient acquisition. GvpA forms the protein shell. It is not clear what function GVs perform in soil bacteria. The protein is Gas vesicle protein A1 of Streptomyces coelicolor (strain ATCC BAA-471 / A3(2) / M145).